A 186-amino-acid polypeptide reads, in one-letter code: UPF0200 protein PH1008 (186 aa).

7–14 (GMPGSGKG) is an ATP binding site.

This sequence belongs to the UPF0200 family.

The chain is UPF0200 protein PH1008 from Pyrococcus horikoshii (strain ATCC 700860 / DSM 12428 / JCM 9974 / NBRC 100139 / OT-3).